The chain runs to 208 residues: Proteasome subunit beta 2 (208 aa).

A propeptide spans 1 to 14 (MGNELQLENKILKG) (removed in mature form; by autocatalysis). Catalysis depends on Thr-15, which acts as the Nucleophile.

It belongs to the peptidase T1B family. The 20S proteasome core is composed of 14 alpha and 14 beta subunits that assemble into four stacked heptameric rings, resulting in a barrel-shaped structure. The two inner rings, each composed of seven catalytic beta subunits, are sandwiched by two outer rings, each composed of seven alpha subunits. The catalytic chamber with the active sites is on the inside of the barrel. Has a gated structure, the ends of the cylinder being occluded by the N-termini of the alpha-subunits. Is capped at one or both ends by the proteasome regulatory ATPase, PAN.

Its subcellular location is the cytoplasm. It catalyses the reaction Cleavage of peptide bonds with very broad specificity.. The formation of the proteasomal ATPase PAN-20S proteasome complex, via the docking of the C-termini of PAN into the intersubunit pockets in the alpha-rings, triggers opening of the gate for substrate entry. Interconversion between the open-gate and close-gate conformations leads to a dynamic regulation of the 20S proteasome proteolysis activity. Its function is as follows. Component of the proteasome core, a large protease complex with broad specificity involved in protein degradation. In Saccharolobus solfataricus (strain ATCC 35092 / DSM 1617 / JCM 11322 / P2) (Sulfolobus solfataricus), this protein is Proteasome subunit beta 2.